The sequence spans 203 residues: Protein GrpE (203 aa).

The segment covering 1-20 (MSDNGDNNTKSPQHNNPQPN) has biased composition (polar residues). Residues 1-46 (MSDNGDNNTKSPQHNNPQPNEKSDGKVQPGQPQVNPQRKFTAGINK) are disordered.

It belongs to the GrpE family. As to quaternary structure, homodimer.

Its subcellular location is the cytoplasm. In terms of biological role, participates actively in the response to hyperosmotic and heat shock by preventing the aggregation of stress-denatured proteins, in association with DnaK and GrpE. It is the nucleotide exchange factor for DnaK and may function as a thermosensor. Unfolded proteins bind initially to DnaJ; upon interaction with the DnaJ-bound protein, DnaK hydrolyzes its bound ATP, resulting in the formation of a stable complex. GrpE releases ADP from DnaK; ATP binding to DnaK triggers the release of the substrate protein, thus completing the reaction cycle. Several rounds of ATP-dependent interactions between DnaJ, DnaK and GrpE are required for fully efficient folding. In Ehrlichia chaffeensis (strain ATCC CRL-10679 / Arkansas), this protein is Protein GrpE.